Consider the following 129-residue polypeptide: Glycine cleavage system H protein (129 aa).

The 83-residue stretch at 24-106 folds into the Lipoyl-binding domain; the sequence is EAVVGITEHA…YGAGWLFRIK (83 aa). At Lys65 the chain carries N6-lipoyllysine.

Belongs to the GcvH family. The glycine cleavage system is composed of four proteins: P, T, L and H. The cofactor is (R)-lipoate.

In terms of biological role, the glycine cleavage system catalyzes the degradation of glycine. The H protein shuttles the methylamine group of glycine from the P protein to the T protein. The chain is Glycine cleavage system H protein from Aeromonas hydrophila subsp. hydrophila (strain ATCC 7966 / DSM 30187 / BCRC 13018 / CCUG 14551 / JCM 1027 / KCTC 2358 / NCIMB 9240 / NCTC 8049).